The primary structure comprises 74 residues: Consomatin Gh1 (74 aa).

The N-terminal stretch at 1 to 22 (MQTACWVMVMMMVWITAPLSEG) is a signal peptide. The propeptide occupies 23–57 (GKLNDVIRGLVPDDVTPQLILRSLFFHRPSDSVVR). Cysteine 65 and cysteine 70 are disulfide-bonded. Residue tryptophan 67 is modified to D-tryptophan. 3 positions are modified to 4-hydroxyproline: proline 71, proline 72, and proline 74.

It belongs to the conotoxin C superfamily. Consomatin family. As to expression, expressed by the venom duct.

Its subcellular location is the secreted. Moderately activates human somatostatin receptors (SSTR) with a preferential activation of SSTR1 and SSTR4. In vivo, does not cause behavioral changes in mice within a few minutes of intracranial injection, but causes a progressive loss of movement thereafter. Four to five hours after injection, mice recover, even with the highest dose tested. Shows antinociception and antihyperalgesia activities in two mouse models of acute pain, most probably by acting outside the central nervous system. This Conus grahami (Cone snail) protein is Consomatin Gh1.